We begin with the raw amino-acid sequence, 342 residues long: Dual-specificity RNA methyltransferase RlmN (342 aa).

The active-site Proton acceptor is glutamate 92. The 232-residue stretch at 98 to 329 folds into the Radical SAM core domain; it reads DLPRSTLCVS…THVRRSRGGE (232 aa). A disulfide bridge links cysteine 105 with cysteine 334. Residues cysteine 112, cysteine 116, and cysteine 119 each coordinate [4Fe-4S] cluster. Residues 161–162, serine 193, 215–217, and asparagine 291 contribute to the S-adenosyl-L-methionine site; these read GE and SLH. Cysteine 334 (S-methylcysteine intermediate) is an active-site residue.

It belongs to the radical SAM superfamily. RlmN family. [4Fe-4S] cluster is required as a cofactor.

Its subcellular location is the cytoplasm. The enzyme catalyses adenosine(2503) in 23S rRNA + 2 reduced [2Fe-2S]-[ferredoxin] + 2 S-adenosyl-L-methionine = 2-methyladenosine(2503) in 23S rRNA + 5'-deoxyadenosine + L-methionine + 2 oxidized [2Fe-2S]-[ferredoxin] + S-adenosyl-L-homocysteine. The catalysed reaction is adenosine(37) in tRNA + 2 reduced [2Fe-2S]-[ferredoxin] + 2 S-adenosyl-L-methionine = 2-methyladenosine(37) in tRNA + 5'-deoxyadenosine + L-methionine + 2 oxidized [2Fe-2S]-[ferredoxin] + S-adenosyl-L-homocysteine. Its function is as follows. Specifically methylates position 2 of adenine 2503 in 23S rRNA and position 2 of adenine 37 in tRNAs. m2A2503 modification seems to play a crucial role in the proofreading step occurring at the peptidyl transferase center and thus would serve to optimize ribosomal fidelity. This is Dual-specificity RNA methyltransferase RlmN from Syntrophobacter fumaroxidans (strain DSM 10017 / MPOB).